The primary structure comprises 190 residues: Elongation factor P-like protein (190 aa).

It belongs to the elongation factor P family.

This chain is Elongation factor P-like protein, found in Citrobacter koseri (strain ATCC BAA-895 / CDC 4225-83 / SGSC4696).